The primary structure comprises 95 residues: Large ribosomal subunit protein bL25 (95 aa).

The protein belongs to the bacterial ribosomal protein bL25 family. Part of the 50S ribosomal subunit; part of the 5S rRNA/L5/L18/L25 subcomplex. Contacts the 5S rRNA. Binds to the 5S rRNA independently of L5 and L18.

In terms of biological role, this is one of the proteins that binds to the 5S RNA in the ribosome where it forms part of the central protuberance. This chain is Large ribosomal subunit protein bL25, found in Haemophilus ducreyi (strain 35000HP / ATCC 700724).